A 486-amino-acid chain; its full sequence is Probable transporter MCH1 (486 aa).

6 helical membrane-spanning segments follow: residues 31 to 51 (ISFF…LFSL), 69 to 89 (FIAS…GYLA), 91 to 111 (CYGP…SYFV), 132 to 152 (FGIC…SSLL), 164 to 184 (LAIS…SQLM), and 204 to 224 (FFGV…SVVS). The tract at residues 236–260 (EMEEADEESPLMTSRSRHSHHSCED) is disordered. A helical transmembrane segment spans residues 280-300 (FINFLKDKSAWLLLASLILNI). The N-linked (GlcNAc...) asparagine glycan is linked to N322. 2 helical membrane passes run 327–348 (VSIM…SDYL) and 357–377 (ICRV…QFMV). An N-linked (GlcNAc...) asparagine glycan is attached at N390. 2 helical membrane-spanning segments follow: residues 395 to 415 (GGLF…DMMG) and 417 to 437 (TWGS…IFYG). An N-linked (GlcNAc...) asparagine glycan is attached at N457. A helical membrane pass occupies residues 458 to 478 (LTAVGLSVSLILIIIVWKGIW).

Belongs to the major facilitator superfamily.

The protein resides in the vacuole membrane. Its function is as follows. Probable transporter. This chain is Probable transporter MCH1 (MCH1), found in Debaryomyces hansenii (strain ATCC 36239 / CBS 767 / BCRC 21394 / JCM 1990 / NBRC 0083 / IGC 2968) (Yeast).